Reading from the N-terminus, the 311-residue chain is Probable manganese-dependent inorganic pyrophosphatase (311 aa).

Residues His-9, Asp-13, Asp-15, Asp-75, His-97, and Asp-149 each coordinate Mn(2+).

This sequence belongs to the PPase class C family. Mn(2+) serves as cofactor.

The protein localises to the cytoplasm. It carries out the reaction diphosphate + H2O = 2 phosphate + H(+). The polypeptide is Probable manganese-dependent inorganic pyrophosphatase (Lactobacillus gasseri (strain ATCC 33323 / DSM 20243 / BCRC 14619 / CIP 102991 / JCM 1131 / KCTC 3163 / NCIMB 11718 / NCTC 13722 / AM63)).